The sequence spans 194 residues: UPF0215 protein TV0037 (194 aa).

This sequence belongs to the UPF0215 family.

The chain is UPF0215 protein TV0037 from Thermoplasma volcanium (strain ATCC 51530 / DSM 4299 / JCM 9571 / NBRC 15438 / GSS1).